The primary structure comprises 504 residues: Signal transduction histidine-protein kinase/phosphatase MprB (504 aa).

Residues 1–26 (MWWFRRRDRAPLRATSSLSLRWRVML) are Cytoplasmic-facing. Residues 27-47 (LAMSMVAMVVVLMSFAVYAVI) form a helical membrane-spanning segment. Residues 48–163 (SAALYSDIDN…PTEAVMNKLR (116 aa)) lie on the Extracellular side of the membrane. A helical membrane pass occupies residues 164–184 (WVLLIVGGIGVAVAAVAGGMV). Residues 185 to 504 (TRAGLRPVGR…SVESQSTRAT (320 aa)) are Cytoplasmic-facing. Residues 186–238 (RAGLRPVGRLTEAAERVARTDDLRPIPVFGSDELARLTEAFNLMLRALAESRE) form the HAMP domain. The 221-residue stretch at 246 to 466 (DAGHELRTPL…SIYVLLPGRR (221 aa)) folds into the Histidine kinase domain. His249 bears the Phosphohistidine; by autocatalysis mark. The interval 471-504 (QLPGATAGARSTDIENSRGSANVISVESQSTRAT) is disordered. The segment covering 487–504 (SRGSANVISVESQSTRAT) has biased composition (polar residues).

Requires Mg(2+) as cofactor. Mn(2+) serves as cofactor. In terms of processing, autophosphorylated.

The protein localises to the cell membrane. The catalysed reaction is ATP + protein L-histidine = ADP + protein N-phospho-L-histidine.. In terms of biological role, member of the two-component regulatory system MprB/MprA which contributes to maintaining a balance among several systems involved in stress resistance and is required for establishment and maintenance of persistent infection in the host. In response to environmental signals MprB acts both as a membrane-associated protein kinase that undergoes autophosphorylation and subsequently transfers the phosphate to MprA, and a protein phosphatase that dephosphorylates phospho-MprA. MprB/MprA up-regulates expression of mprA and pepD. The chain is Signal transduction histidine-protein kinase/phosphatase MprB (mprB) from Mycobacterium bovis (strain ATCC BAA-935 / AF2122/97).